The sequence spans 133 residues: Peptide methionine sulfoxide reductase MsrB (133 aa).

Residues Leu8 to Arg130 form the MsrB domain. Residues Cys47, Cys50, Cys96, and Cys99 each coordinate Zn(2+). Cys119 (nucleophile) is an active-site residue.

Belongs to the MsrB Met sulfoxide reductase family. Zn(2+) serves as cofactor.

The catalysed reaction is L-methionyl-[protein] + [thioredoxin]-disulfide + H2O = L-methionyl-(R)-S-oxide-[protein] + [thioredoxin]-dithiol. In Azotobacter vinelandii (strain DJ / ATCC BAA-1303), this protein is Peptide methionine sulfoxide reductase MsrB.